The following is a 299-amino-acid chain: Lipoyl synthase 2 (299 aa).

Positions 43, 48, 54, 69, 73, 76, and 294 each coordinate [4Fe-4S] cluster. Residues 55–283 (YAAGTATFLL…GAVARDLGFA (229 aa)) form the Radical SAM core domain.

This sequence belongs to the radical SAM superfamily. Lipoyl synthase family. [4Fe-4S] cluster is required as a cofactor.

It localises to the cytoplasm. It catalyses the reaction [[Fe-S] cluster scaffold protein carrying a second [4Fe-4S](2+) cluster] + N(6)-octanoyl-L-lysyl-[protein] + 2 oxidized [2Fe-2S]-[ferredoxin] + 2 S-adenosyl-L-methionine + 4 H(+) = [[Fe-S] cluster scaffold protein] + N(6)-[(R)-dihydrolipoyl]-L-lysyl-[protein] + 4 Fe(3+) + 2 hydrogen sulfide + 2 5'-deoxyadenosine + 2 L-methionine + 2 reduced [2Fe-2S]-[ferredoxin]. It functions in the pathway protein modification; protein lipoylation via endogenous pathway; protein N(6)-(lipoyl)lysine from octanoyl-[acyl-carrier-protein]: step 2/2. Its function is as follows. Catalyzes the radical-mediated insertion of two sulfur atoms into the C-6 and C-8 positions of the octanoyl moiety bound to the lipoyl domains of lipoate-dependent enzymes, thereby converting the octanoylated domains into lipoylated derivatives. The sequence is that of Lipoyl synthase 2 from Parasynechococcus marenigrum (strain WH8102).